Consider the following 156-residue polypeptide: Phospholipase A2 A2-hormotoxin-Apt1a (156 aa).

A signal peptide spans 1-19; the sequence is MQLYTYFFTFSLVLILALA. Residues 20–35 constitute a propeptide that is removed on maturation; it reads DQENKSLDFTQEGGIA. Disulfide bonds link Cys-62/Cys-156, Cys-64/Cys-80, Cys-79/Cys-138, Cys-86/Cys-131, and Cys-115/Cys-129. Ca(2+) is bound by residues Gly-65 and Gly-67. Residue His-83 is part of the active site. Asp-84 contributes to the Ca(2+) binding site. Asp-132 is a catalytic residue.

This sequence belongs to the phospholipase A2 family. The cofactor is Ca(2+).

The protein resides in the secreted. The protein localises to the nematocyst. The enzyme catalyses a 1,2-diacyl-sn-glycero-3-phosphocholine + H2O = a 1-acyl-sn-glycero-3-phosphocholine + a fatty acid + H(+). In terms of biological role, sea anemone phospholipase A2 (PLA2) that may have a role both in defense and in digestion, since its expression and enzymatic activity were found both in the acontia (defensive organs) and tentacles. PLA2 catalyzes the calcium-dependent hydrolysis of the 2-acyl groups in 3-sn-phosphoglycerides. This is Phospholipase A2 A2-hormotoxin-Apt1a from Adamsia palliata (Cloak anemone).